The sequence spans 249 residues: BPI fold-containing family A member 2 (249 aa).

The first 18 residues, 1–18 (MLQLWKLVLLCGVLTGTS), serve as a signal peptide directing secretion. N-linked (GlcNAc...) asparagine glycans are attached at residues asparagine 124 and asparagine 132. Cysteine 174 and cysteine 217 are oxidised to a cystine.

It belongs to the BPI/LBP/Plunc superfamily. Plunc family. Detected in submandibular gland. Secreted into saliva.

It localises to the secreted. Has strong antibacterial activity against P.aeruginosa. The protein is BPI fold-containing family A member 2 (BPIFA2) of Homo sapiens (Human).